The chain runs to 89 residues: Large ribosomal subunit protein bL27 (89 aa).

The interval 1 to 24 (MAHKKGTGSTRNGRDSRSQRLGVK) is disordered.

It belongs to the bacterial ribosomal protein bL27 family.

The polypeptide is Large ribosomal subunit protein bL27 (Microcystis aeruginosa (strain NIES-843 / IAM M-2473)).